A 288-amino-acid polypeptide reads, in one-letter code: 2-dehydro-3-deoxyphosphooctonate aldolase (288 aa).

It belongs to the KdsA family.

The protein resides in the cytoplasm. It catalyses the reaction D-arabinose 5-phosphate + phosphoenolpyruvate + H2O = 3-deoxy-alpha-D-manno-2-octulosonate-8-phosphate + phosphate. The protein operates within carbohydrate biosynthesis; 3-deoxy-D-manno-octulosonate biosynthesis; 3-deoxy-D-manno-octulosonate from D-ribulose 5-phosphate: step 2/3. Its pathway is bacterial outer membrane biogenesis; lipopolysaccharide biosynthesis. The chain is 2-dehydro-3-deoxyphosphooctonate aldolase from Syntrophobacter fumaroxidans (strain DSM 10017 / MPOB).